The chain runs to 404 residues: Coenzyme F420H(2) oxidase (404 aa).

The Fe cation site is built by His83, Glu85, Asp87, His88, His151, Asp170, and His233. The Flavodoxin-like domain occupies 259 to 399 (VTVIYDTMHG…ACFEAGRKLA (141 aa)). Residues 265–270 (TMHGST), 317–320 (TIYD), and 351–356 (SMGGNG) contribute to the FMN site.

It in the N-terminal section; belongs to the zinc metallo-hydrolase group 3 family. As to quaternary structure, homodimer. Homotetramer. The tetramer is composed of two functional dimers. Requires FMN as cofactor. It depends on Fe cation as a cofactor.

The catalysed reaction is 2 reduced coenzyme F420-(gamma-L-Glu)(n) + O2 = 2 oxidized coenzyme F420-(gamma-L-Glu)(n) + 2 H2O + 2 H(+). Catalyzes the oxidation of F420H(2) with O(2). May be involved in O(2) detoxification, reducing the intracellular O(2) concentration to a level allowing growth at the expense of methane formation. This chain is Coenzyme F420H(2) oxidase, found in Methanothermobacter marburgensis (strain ATCC BAA-927 / DSM 2133 / JCM 14651 / NBRC 100331 / OCM 82 / Marburg) (Methanobacterium thermoautotrophicum).